We begin with the raw amino-acid sequence, 1496 residues long: Rap guanine nucleotide exchange factor 2 (1496 aa).

Disordered stretches follow at residues 40 to 59 and 68 to 101; these read HVSSSHSGCSITSDSGSSSL and SEAGDMDLSGLPETAVDSEDDDDEEDIERASDPL. The span at 83–94 shows a compositional bias: acidic residues; sequence VDSEDDDDEEDI. 135–254 contacts a nucleoside 3',5'-cyclic phosphate; that stretch reads AFANMTMSVR…VEEEGEIVMV (120 aa). Positions 267-380 constitute an N-terminal Ras-GEF domain; the sequence is KGHIVIKGTS…RLLNIACAAK (114 aa). Residues 385–470 enclose the PDZ domain; sequence LMTLTKPSRE…ITVKTNLFVF (86 aa). Position 501 is a phosphoserine (Ser501). The Ras-associating domain maps to 606 to 692; sequence PDQVLRVFKA…GRYYLKNNME (87 aa). Thr644 bears the Phosphothreonine; by PLK2 mark. The Ras-GEF domain maps to 717–944; sequence STVEVATQLS…SQGSANATVL (228 aa). The residue at position 806 (Ser806) is a Phosphoserine; by PLK2. Phosphoserine is present on Ser930. 2 positions are modified to phosphoserine; by PLK2: Ser933 and Ser1022. Residues 1002-1051 form a disordered region; sequence PATSTLPKNPGDKKPVKSETSPVAPRAGPQQKVQPQQPLAQPQPPHKVSQ. The segment covering 1030-1041 has biased composition (low complexity); sequence PQQKVQPQQPLA. Phosphoserine occurs at positions 1079, 1088, 1094, 1115, 1119, and 1158. The tract at residues 1093 to 1159 is disordered; the sequence is GSLERHRKQA…RSSIVSNSSF (67 aa). 2 stretches are compositionally biased toward low complexity: residues 1110 to 1124 and 1140 to 1159; these read SSQLSSPPTSPQSSP and SDSGHSEISSRSSIVSNSSF. Ser1175 carries the phosphoserine; by PLK2 modification. Disordered stretches follow at residues 1224-1256, 1303-1369, and 1390-1496; these read STEELSHDQGDRASLDAADSGRGSWTSCSSGSH, STKY…EEAK, and RKEG…VSAV. The span at 1227-1237 shows a compositional bias: basic and acidic residues; the sequence is ELSHDQGDRAS. Composition is skewed to polar residues over residues 1246–1256 and 1306–1330; these read GSWTSCSSGSH and YNRQNQSRESLEQAQSRASWASSTG. The span at 1440–1455 shows a compositional bias: low complexity; that stretch reads PTEAPAPGQTPPAAAA. The segment covering 1485–1496 has biased composition (acidic residues); it reads AEEDEDEQVSAV.

The protein belongs to the RAPGEF2 family. In terms of assembly, found in a complex, at least composed of KIDINS220, MAGI2, NTRK1 and RAPGEF2; the complex is mainly formed at late endosomes in a neuronal growth factor (NGF)-dependent manner. Interacts (via C-terminal domain) with NEDD4 (via WW domains); this interaction leads to ubiquitination and degradation via the proteasome pathway in a cAMP-independent manner. Interacts with MAGI1 (via PDZ domain). Interacts with ADRB1 (via C-terminal PDZ motif); the interaction is direct. Interacts (via Ras-associating domain) with RAP1A (via GTP-bound active form). Interacts weakly with HRAS (via GDP- and GTP-bound forms). Interacts (via C-terminal domain) with MAGI2 (via PDZ and WW domains). Interacts with CDH1, CTNNB1 and TJP1. In terms of processing, ubiquitinated by NEDD4, leading to proteasomal degradation. Phosphorylation by PLK2 promotes its activity. As to expression, expressed in all layers of the cerebral cortex, hippocampus and cerebellum. Expressed in the cortical plate, cingulate cortex and the subventricular zone. Expressed in neurons and endocrine cells (at protein level). Expressed in melanoma cells.

The protein resides in the cytoplasm. Its subcellular location is the perinuclear region. It localises to the cell membrane. It is found in the late endosome. The protein localises to the cell junction. Its function is as follows. Functions as a guanine nucleotide exchange factor (GEF), which activates Rap and Ras family of small GTPases by exchanging bound GDP for free GTP in a cAMP-dependent manner. Serves as a link between cell surface receptors and Rap/Ras GTPases in intracellular signaling cascades. Also acts as an effector for Rap1 by direct association with Rap1-GTP thereby leading to the amplification of Rap1-mediated signaling. Shows weak activity on HRAS. It is controversial whether RAPGEF2 binds cAMP and cGMP or not. Its binding to ligand-activated beta-1 adrenergic receptor ADRB1 leads to the Ras activation through the G(s)-alpha signaling pathway. Involved in the cAMP-induced Ras and Erk1/2 signaling pathway that leads to sustained inhibition of long term melanogenesis by reducing dendrite extension and melanin synthesis. Also provides inhibitory signals for cell proliferation of melanoma cells and promotes their apoptosis in a cAMP-independent nanner. Regulates cAMP-induced neuritogenesis by mediating the Rap1/B-Raf/ERK signaling through a pathway that is independent on both PKA and RAPGEF3/RAPGEF4. Involved in neuron migration and in the formation of the major forebrain fiber connections forming the corpus callosum, the anterior commissure and the hippocampal commissure during brain development. Involved in neuronal growth factor (NGF)-induced sustained activation of Rap1 at late endosomes and in brain-derived neurotrophic factor (BDNF)-induced axon outgrowth of hippocampal neurons. Plays a role in the regulation of embryonic blood vessel formation and in the establishment of basal junction integrity and endothelial barrier function. May be involved in the regulation of the vascular endothelial growth factor receptor KDR and cadherin CDH5 expression at allantois endothelial cell-cell junctions. This chain is Rap guanine nucleotide exchange factor 2 (Rapgef2), found in Mus musculus (Mouse).